Reading from the N-terminus, the 754-residue chain is Phosphoribosylformylglycinamidine synthase subunit PurL (754 aa).

Residue His54 is part of the active site. ATP-binding residues include Tyr57 and Lys101. Glu103 is a binding site for Mg(2+). Substrate contacts are provided by residues 104–107 (SHNH) and Arg126. His105 (proton acceptor) is an active-site residue. Asp127 serves as a coordination point for Mg(2+). Gln252 contributes to the substrate binding site. Position 280 (Asp280) interacts with Mg(2+). 324-326 (ESQ) is a binding site for substrate. The disordered stretch occupies residues 386 to 412 (PVYQRPVSRPESQEALNADSSKGLPRP). Asn512 and Gly549 together coordinate ATP. Asn550 contributes to the Mg(2+) binding site. A substrate-binding site is contributed by Ser552.

Belongs to the FGAMS family. Monomer. Part of the FGAM synthase complex composed of 1 PurL, 1 PurQ and 2 PurS subunits.

It is found in the cytoplasm. The catalysed reaction is N(2)-formyl-N(1)-(5-phospho-beta-D-ribosyl)glycinamide + L-glutamine + ATP + H2O = 2-formamido-N(1)-(5-O-phospho-beta-D-ribosyl)acetamidine + L-glutamate + ADP + phosphate + H(+). Its pathway is purine metabolism; IMP biosynthesis via de novo pathway; 5-amino-1-(5-phospho-D-ribosyl)imidazole from N(2)-formyl-N(1)-(5-phospho-D-ribosyl)glycinamide: step 1/2. Its function is as follows. Part of the phosphoribosylformylglycinamidine synthase complex involved in the purines biosynthetic pathway. Catalyzes the ATP-dependent conversion of formylglycinamide ribonucleotide (FGAR) and glutamine to yield formylglycinamidine ribonucleotide (FGAM) and glutamate. The FGAM synthase complex is composed of three subunits. PurQ produces an ammonia molecule by converting glutamine to glutamate. PurL transfers the ammonia molecule to FGAR to form FGAM in an ATP-dependent manner. PurS interacts with PurQ and PurL and is thought to assist in the transfer of the ammonia molecule from PurQ to PurL. The sequence is that of Phosphoribosylformylglycinamidine synthase subunit PurL from Mycobacterium leprae (strain Br4923).